Consider the following 323-residue polypeptide: ADP-L-glycero-D-manno-heptose-6-epimerase (323 aa).

NADP(+) is bound by residues 10–11, 31–32, Lys-38, Arg-53, 75–79, and Asn-92; these read FI, DN, and MGACS. Catalysis depends on Tyr-143, which acts as the Proton acceptor. Lys-147 is a binding site for NADP(+). Asn-170 is a binding site for substrate. Val-171 and Lys-179 together coordinate NADP(+). Lys-179 (proton acceptor) is an active-site residue. Residues Asp-181, Lys-188, 202 to 205, Arg-216, and Tyr-281 each bind substrate; that span reads FRSC.

It belongs to the NAD(P)-dependent epimerase/dehydratase family. HldD subfamily. As to quaternary structure, homopentamer. Requires NADP(+) as cofactor.

It carries out the reaction ADP-D-glycero-beta-D-manno-heptose = ADP-L-glycero-beta-D-manno-heptose. It participates in nucleotide-sugar biosynthesis; ADP-L-glycero-beta-D-manno-heptose biosynthesis; ADP-L-glycero-beta-D-manno-heptose from D-glycero-beta-D-manno-heptose 7-phosphate: step 4/4. Its function is as follows. Catalyzes the interconversion between ADP-D-glycero-beta-D-manno-heptose and ADP-L-glycero-beta-D-manno-heptose via an epimerization at carbon 6 of the heptose. This chain is ADP-L-glycero-D-manno-heptose-6-epimerase, found in Nitratidesulfovibrio vulgaris (strain DP4) (Desulfovibrio vulgaris).